A 253-amino-acid chain; its full sequence is tRNA pseudouridine synthase A (253 aa).

The active-site Nucleophile is Asp51. Residue Tyr110 coordinates substrate.

It belongs to the tRNA pseudouridine synthase TruA family. In terms of assembly, homodimer.

It carries out the reaction uridine(38/39/40) in tRNA = pseudouridine(38/39/40) in tRNA. Formation of pseudouridine at positions 38, 39 and 40 in the anticodon stem and loop of transfer RNAs. The protein is tRNA pseudouridine synthase A of Wolinella succinogenes (strain ATCC 29543 / DSM 1740 / CCUG 13145 / JCM 31913 / LMG 7466 / NCTC 11488 / FDC 602W) (Vibrio succinogenes).